The sequence spans 365 residues: Methylthioribose-1-phosphate isomerase (365 aa).

Asp-255 serves as the catalytic Proton donor.

The protein belongs to the eIF-2B alpha/beta/delta subunits family. MtnA subfamily.

The protein resides in the cytoplasm. Its subcellular location is the nucleus. The catalysed reaction is 5-(methylsulfanyl)-alpha-D-ribose 1-phosphate = 5-(methylsulfanyl)-D-ribulose 1-phosphate. The protein operates within amino-acid biosynthesis; L-methionine biosynthesis via salvage pathway; L-methionine from S-methyl-5-thio-alpha-D-ribose 1-phosphate: step 1/6. Catalyzes the interconversion of methylthioribose-1-phosphate (MTR-1-P) into methylthioribulose-1-phosphate (MTRu-1-P). The chain is Methylthioribose-1-phosphate isomerase from Drosophila willistoni (Fruit fly).